The chain runs to 159 residues: NAD(P)H-quinone oxidoreductase subunit J, chloroplastic (159 aa).

The protein belongs to the complex I 30 kDa subunit family. In terms of assembly, NDH is composed of at least 16 different subunits, 5 of which are encoded in the nucleus.

It localises to the plastid. Its subcellular location is the chloroplast thylakoid membrane. The catalysed reaction is a plastoquinone + NADH + (n+1) H(+)(in) = a plastoquinol + NAD(+) + n H(+)(out). It catalyses the reaction a plastoquinone + NADPH + (n+1) H(+)(in) = a plastoquinol + NADP(+) + n H(+)(out). Functionally, NDH shuttles electrons from NAD(P)H:plastoquinone, via FMN and iron-sulfur (Fe-S) centers, to quinones in the photosynthetic chain and possibly in a chloroplast respiratory chain. The immediate electron acceptor for the enzyme in this species is believed to be plastoquinone. Couples the redox reaction to proton translocation, and thus conserves the redox energy in a proton gradient. The polypeptide is NAD(P)H-quinone oxidoreductase subunit J, chloroplastic (Populus trichocarpa (Western balsam poplar)).